Consider the following 270-residue polypeptide: Formamidopyrimidine-DNA glycosylase (270 aa).

The active-site Schiff-base intermediate with DNA is P2. E3 acts as the Proton donor in catalysis. K58 (proton donor; for beta-elimination activity) is an active-site residue. H90, R109, and R152 together coordinate DNA. The segment at 237-270 adopts an FPG-type zinc-finger fold; that stretch reads RVYGREGEPCHCGTVIRRRVDGGRSTFYCPKCQK. R260 acts as the Proton donor; for delta-elimination activity in catalysis.

The protein belongs to the FPG family. As to quaternary structure, monomer. It depends on Zn(2+) as a cofactor.

The enzyme catalyses Hydrolysis of DNA containing ring-opened 7-methylguanine residues, releasing 2,6-diamino-4-hydroxy-5-(N-methyl)formamidopyrimidine.. It carries out the reaction 2'-deoxyribonucleotide-(2'-deoxyribose 5'-phosphate)-2'-deoxyribonucleotide-DNA = a 3'-end 2'-deoxyribonucleotide-(2,3-dehydro-2,3-deoxyribose 5'-phosphate)-DNA + a 5'-end 5'-phospho-2'-deoxyribonucleoside-DNA + H(+). In terms of biological role, involved in base excision repair of DNA damaged by oxidation or by mutagenic agents. Acts as a DNA glycosylase that recognizes and removes damaged bases. Has a preference for oxidized purines, such as 7,8-dihydro-8-oxoguanine (8-oxoG). Has AP (apurinic/apyrimidinic) lyase activity and introduces nicks in the DNA strand. Cleaves the DNA backbone by beta-delta elimination to generate a single-strand break at the site of the removed base with both 3'- and 5'-phosphates. This Rhizorhabdus wittichii (strain DSM 6014 / CCUG 31198 / JCM 15750 / NBRC 105917 / EY 4224 / RW1) (Sphingomonas wittichii) protein is Formamidopyrimidine-DNA glycosylase.